The sequence spans 337 residues: Biotin synthase (337 aa).

One can recognise a Radical SAM core domain in the interval 58-283 (EDVEVEGIVS…RTVLRYAGGR (226 aa)). 3 residues coordinate [4Fe-4S] cluster: cysteine 73, cysteine 77, and cysteine 80. 4 residues coordinate [2Fe-2S] cluster: cysteine 116, cysteine 149, cysteine 208, and arginine 278.

The protein belongs to the radical SAM superfamily. Biotin synthase family. As to quaternary structure, homodimer. The cofactor is [4Fe-4S] cluster. It depends on [2Fe-2S] cluster as a cofactor.

The enzyme catalyses (4R,5S)-dethiobiotin + (sulfur carrier)-SH + 2 reduced [2Fe-2S]-[ferredoxin] + 2 S-adenosyl-L-methionine = (sulfur carrier)-H + biotin + 2 5'-deoxyadenosine + 2 L-methionine + 2 oxidized [2Fe-2S]-[ferredoxin]. The protein operates within cofactor biosynthesis; biotin biosynthesis; biotin from 7,8-diaminononanoate: step 2/2. Catalyzes the conversion of dethiobiotin (DTB) to biotin by the insertion of a sulfur atom into dethiobiotin via a radical-based mechanism. The sequence is that of Biotin synthase from Pseudarthrobacter chlorophenolicus (strain ATCC 700700 / DSM 12829 / CIP 107037 / JCM 12360 / KCTC 9906 / NCIMB 13794 / A6) (Arthrobacter chlorophenolicus).